The chain runs to 372 residues: Glutamate 5-kinase (372 aa).

Lys-14 lines the ATP pocket. Substrate contacts are provided by Ser-54, Asp-141, and Asn-153. ATP contacts are provided by residues 173–174 and 215–221; these read TD and TGGMATK. One can recognise a PUA domain in the interval 280–358; the sequence is RGQVVLDTGA…DNIEEILGYD (79 aa).

The protein belongs to the glutamate 5-kinase family.

It is found in the cytoplasm. It carries out the reaction L-glutamate + ATP = L-glutamyl 5-phosphate + ADP. It functions in the pathway amino-acid biosynthesis; L-proline biosynthesis; L-glutamate 5-semialdehyde from L-glutamate: step 1/2. In terms of biological role, catalyzes the transfer of a phosphate group to glutamate to form L-glutamate 5-phosphate. In Shewanella halifaxensis (strain HAW-EB4), this protein is Glutamate 5-kinase.